The sequence spans 388 residues: Succinate--CoA ligase [ADP-forming] subunit beta (388 aa).

Residues Lys9–His244 enclose the ATP-grasp domain. ATP is bound by residues Lys46, Gly53–Gly55, Glu99, Ser102, and Glu107. Mg(2+) is bound by residues Asn199 and Asp213. Substrate-binding positions include Asn264 and Gly321 to Val323.

It belongs to the succinate/malate CoA ligase beta subunit family. Heterotetramer of two alpha and two beta subunits. Mg(2+) serves as cofactor.

The enzyme catalyses succinate + ATP + CoA = succinyl-CoA + ADP + phosphate. It catalyses the reaction GTP + succinate + CoA = succinyl-CoA + GDP + phosphate. The protein operates within carbohydrate metabolism; tricarboxylic acid cycle; succinate from succinyl-CoA (ligase route): step 1/1. Its function is as follows. Succinyl-CoA synthetase functions in the citric acid cycle (TCA), coupling the hydrolysis of succinyl-CoA to the synthesis of either ATP or GTP and thus represents the only step of substrate-level phosphorylation in the TCA. The beta subunit provides nucleotide specificity of the enzyme and binds the substrate succinate, while the binding sites for coenzyme A and phosphate are found in the alpha subunit. This Vibrio vulnificus (strain CMCP6) protein is Succinate--CoA ligase [ADP-forming] subunit beta.